The chain runs to 209 residues: Uracil phosphoribosyltransferase (209 aa).

5-phospho-alpha-D-ribose 1-diphosphate contacts are provided by residues R79, R104, and 131-139; that span reads DPMLATGGS. Uracil is bound by residues I194 and 199-201; that span reads GDA. D200 provides a ligand contact to 5-phospho-alpha-D-ribose 1-diphosphate.

It belongs to the UPRTase family. The cofactor is Mg(2+).

It carries out the reaction UMP + diphosphate = 5-phospho-alpha-D-ribose 1-diphosphate + uracil. Its pathway is pyrimidine metabolism; UMP biosynthesis via salvage pathway; UMP from uracil: step 1/1. With respect to regulation, allosterically activated by GTP. Its function is as follows. Catalyzes the conversion of uracil and 5-phospho-alpha-D-ribose 1-diphosphate (PRPP) to UMP and diphosphate. In Francisella tularensis subsp. novicida (strain U112), this protein is Uracil phosphoribosyltransferase.